The primary structure comprises 490 residues: Protein nucleotidyltransferase YdiU (490 aa).

The ATP site is built by Gly89, Gly91, Arg92, Lys112, Asp124, Gly125, Arg175, and Arg182. Catalysis depends on Asp251, which acts as the Proton acceptor. Positions 252 and 261 each coordinate Mg(2+). Asp261 contributes to the ATP binding site.

This sequence belongs to the SELO family. Mg(2+) serves as cofactor. The cofactor is Mn(2+).

It carries out the reaction L-seryl-[protein] + ATP = 3-O-(5'-adenylyl)-L-seryl-[protein] + diphosphate. The enzyme catalyses L-threonyl-[protein] + ATP = 3-O-(5'-adenylyl)-L-threonyl-[protein] + diphosphate. The catalysed reaction is L-tyrosyl-[protein] + ATP = O-(5'-adenylyl)-L-tyrosyl-[protein] + diphosphate. It catalyses the reaction L-histidyl-[protein] + UTP = N(tele)-(5'-uridylyl)-L-histidyl-[protein] + diphosphate. It carries out the reaction L-seryl-[protein] + UTP = O-(5'-uridylyl)-L-seryl-[protein] + diphosphate. The enzyme catalyses L-tyrosyl-[protein] + UTP = O-(5'-uridylyl)-L-tyrosyl-[protein] + diphosphate. Nucleotidyltransferase involved in the post-translational modification of proteins. It can catalyze the addition of adenosine monophosphate (AMP) or uridine monophosphate (UMP) to a protein, resulting in modifications known as AMPylation and UMPylation. This chain is Protein nucleotidyltransferase YdiU, found in Vibrio vulnificus (strain YJ016).